A 41-amino-acid chain; its full sequence is Photosystem I reaction center subunit IX (41 aa).

A helical transmembrane segment spans residues 7–27; the sequence is YLSTAPVITAIWLGITAGILI.

It belongs to the PsaJ family.

It is found in the cellular thylakoid membrane. In terms of biological role, may help in the organization of the PsaE and PsaF subunits. The protein is Photosystem I reaction center subunit IX of Cyanothece sp. (strain PCC 7425 / ATCC 29141).